Reading from the N-terminus, the 622-residue chain is Modification methylase LlaI (622 aa).

It belongs to the N(4)/N(6)-methyltransferase family.

The enzyme catalyses a 2'-deoxyadenosine in DNA + S-adenosyl-L-methionine = an N(6)-methyl-2'-deoxyadenosine in DNA + S-adenosyl-L-homocysteine + H(+). An alpha subtype methylase that modifies unknown specific adenine residues, and protects the DNA from cleavage by the LlaI endonuclease. This is Modification methylase LlaI from Lactococcus lactis subsp. lactis (Streptococcus lactis).